Here is a 250-residue protein sequence, read N- to C-terminus: MEFKVDTHTHTYASGHAYSTLIENAKSAKENGLTMFCSTDHAESMPGAPHYWFFSNQKILPRFLEGVAIVRGVESNILNIEGEIDIPPSVDRNLDWVIASFHEPVFPPANKEAHTEALINVIKSGRVDALGHLGNPNFDFDFEQVLKCAKEHNVAIEINNTTLKGNSRVGSVDRCHEIAQIGKALDVYFTTGSDAHFCHDVGNLELVSELMDNLDIDSNKVITHSAKQFLSFLELRGRLPIAEYDEIRNA.

Zn(2+)-binding residues include His8, His10, His16, His41, Glu74, His102, His132, Asp194, and His196.

It belongs to the PHP family. Zn(2+) is required as a cofactor.

The protein is Probable phosphatase VPA1527 of Vibrio parahaemolyticus serotype O3:K6 (strain RIMD 2210633).